A 162-amino-acid polypeptide reads, in one-letter code: Sorting nexin-3 (162 aa).

Ala-2 carries the N-acetylalanine modification. One can recognise a PX domain in the interval 27 to 151 (NFLEIDVSNP…HMFLQDEIID (125 aa)). Position 43 is an omega-N-methylarginine (Arg-43). A 1,2-diacyl-sn-glycero-3-phospho-(1D-myo-inositol-3-phosphate) contacts are provided by Arg-70, Ser-72, Lys-95, and Arg-118. Phosphoserine is present on Ser-72. A Glycyl lysine isopeptide (Lys-Gly) (interchain with G-Cter in SUMO2) cross-link involves residue Lys-95. Positions 147–162 (DEIIDKSYTPSKIRHA) are binds predominantly to PtdIns(P5) and weaker to PtdIns(P3) abd PtdIns(P4); involved in neurite outgrowth regulation.

The protein belongs to the sorting nexin family. As to quaternary structure, interacts with VPS26A, VPS29 and VPS35; the interaction with VPS35 is direct. The association with the retromer CSC subcomplex subunits is proposed to represent a functional distinct retromer variant described as SNX3-retromer complex. Interacts with USP10 and SCNN1A. Interacts with TRFC. Interacts with SNX8; 2 molecules of SNX8 seems to associate with one molecule of SNX3. Interacts with PTPRU. Interacts with MON2 and DOP1B. Ubiquitinated, leading to its proteasomal degradation. Deubiquitinated by USP10.

It is found in the early endosome. It localises to the cytoplasmic vesicle. The protein resides in the phagosome. In terms of biological role, phosphoinositide-binding protein required for multivesicular body formation. Specifically binds phosphatidylinositol 3-phosphate (PtdIns(P3)). Can also bind phosphatidylinositol 4-phosphate (PtdIns(P4)), phosphatidylinositol 5-phosphate (PtdIns(P5)) and phosphatidylinositol 3,5-biphosphate (PtdIns(3,5)P2). Plays a role in protein transport between cellular compartments. Together with RAB7A facilitates endosome membrane association of the retromer cargo-selective subcomplex (CSC/VPS). May in part act as component of the SNX3-retromer complex which mediates the retrograde endosome-to-TGN transport of WLS distinct from the SNX-BAR retromer pathway. Promotes stability and cell surface expression of epithelial sodium channel (ENAC) subunits SCNN1A and SCNN1G. Not involved in EGFR degradation. Involved in the regulation of phagocytosis in dendritic cells possibly by regulating EEA1 recruitment to the nascent phagosomes. Involved in iron homeostasis through regulation of endocytic recycling of the transferrin receptor TFRC presumably by delivering the transferrin:transferrin receptor complex to recycling endosomes; the function may involve the CSC retromer subcomplex. In the case of Salmonella enterica infection plays arole in maturation of the Salmonella-containing vacuole (SCV) and promotes recruitment of LAMP1 to SCVs. The polypeptide is Sorting nexin-3 (Homo sapiens (Human)).